Reading from the N-terminus, the 244-residue chain is Protein crossbronx (244 aa).

The region spanning glutamine 20–glutamate 176 is the UBC core domain. The disordered stretch occupies residues alanine 209–glutamate 244.

Belongs to the ubiquitin-conjugating enzyme family. FTS subfamily.

This is Protein crossbronx (cbx) from Drosophila erecta (Fruit fly).